A 318-amino-acid polypeptide reads, in one-letter code: Lytic amidase (318 aa).

Residues 19–151 form the N-acetylmuramoyl-L-alanine amidase domain; that stretch reads PYRQVHAHST…NNHSDHVDPY (133 aa). Cell wall-binding repeat units lie at residues 175–194, 196–215, 217–237, 238–257, 258–277, and 280–301; these read ATGW…DGSY, KDKF…SGYM, SDRW…SGEM, ATGW…EGAM, KTGW…KEGA, and SNAF…DGTL.

This sequence belongs to the N-acetylmuramoyl-L-alanine amidase 2 family.

It localises to the secreted. The catalysed reaction is Hydrolyzes the link between N-acetylmuramoyl residues and L-amino acid residues in certain cell-wall glycopeptides.. The protein is Lytic amidase (HBL) of Streptococcus pneumoniae phage HB-3.